The primary structure comprises 465 residues: Chromosomal replication initiator protein DnaA (465 aa).

The interval 1 to 87 (MLWTDCLTRL…RPGSILSSSE (87 aa)) is domain I, interacts with DnaA modulators. A disordered region spans residues 81–123 (SILSSSEQPATTTAALQTAPIPQPAKGKREPEPVANTAVSSKS). Residues 88-100 (QPATTTAALQTAP) show a composition bias toward low complexity. The segment at 88 to 127 (QPATTTAALQTAPIPQPAKGKREPEPVANTAVSSKSSKKK) is domain II. The domain III, AAA+ region stretch occupies residues 128 to 345 (LLNPQFTFSL…GALNKVVAIS (218 aa)). The ATP site is built by G173, G175, K176, and T177. A domain IV, binds dsDNA region spans residues 346 to 465 (RFKGAPIDLD…YKNLLRLLQS (120 aa)).

It belongs to the DnaA family. Oligomerizes as a right-handed, spiral filament on DNA at oriC.

The protein resides in the cytoplasm. Its function is as follows. Plays an essential role in the initiation and regulation of chromosomal replication. ATP-DnaA binds to the origin of replication (oriC) to initiate formation of the DNA replication initiation complex once per cell cycle. Binds the DnaA box (a 9 base pair repeat at the origin) and separates the double-stranded (ds)DNA. Forms a right-handed helical filament on oriC DNA; dsDNA binds to the exterior of the filament while single-stranded (ss)DNA is stabiized in the filament's interior. The ATP-DnaA-oriC complex binds and stabilizes one strand of the AT-rich DNA unwinding element (DUE), permitting loading of DNA polymerase. After initiation quickly degrades to an ADP-DnaA complex that is not apt for DNA replication. Binds acidic phospholipids. The polypeptide is Chromosomal replication initiator protein DnaA (Acinetobacter baumannii (strain SDF)).